A 434-amino-acid chain; its full sequence is D-amino acid dehydrogenase (434 aa).

3–17 (VLVLGSGVIGTTSAW) provides a ligand contact to FAD.

It belongs to the DadA oxidoreductase family. FAD is required as a cofactor.

It carries out the reaction a D-alpha-amino acid + A + H2O = a 2-oxocarboxylate + AH2 + NH4(+). It functions in the pathway amino-acid degradation; D-alanine degradation; NH(3) and pyruvate from D-alanine: step 1/1. In terms of biological role, oxidative deamination of D-amino acids. The polypeptide is D-amino acid dehydrogenase (Stenotrophomonas maltophilia (strain R551-3)).